Consider the following 394-residue polypeptide: A-type flagellin (394 aa).

This sequence belongs to the bacterial flagellin family. Phosphorylated on tyrosine residue(s). In terms of processing, flagellin from strain 5939 but not from strain 170018 is glycosylated.

It is found in the secreted. The protein localises to the bacterial flagellum. Functionally, flagellin is the subunit protein which polymerizes to form the filaments of bacterial flagella. The protein is A-type flagellin (fliC) of Pseudomonas aeruginosa.